A 545-amino-acid polypeptide reads, in one-letter code: Esterase-5B (545 aa).

The signal sequence occupies residues Met1–Ala19. Cys84 and Cys103 are joined by a disulfide. Asn113 is a glycosylation site (N-linked (GlcNAc...) asparagine). Residue Ser207 is the Acyl-ester intermediate of the active site. A disulfide bond links Cys259 and Cys271. N-linked (GlcNAc...) asparagine glycosylation occurs at Asn421. His467 functions as the Charge relay system in the catalytic mechanism. N-linked (GlcNAc...) asparagine glycosylation occurs at Asn507. A disulfide bridge links Cys515 with Cys536.

Belongs to the type-B carboxylesterase/lipase family. Homodimer.

It localises to the secreted. It carries out the reaction a carboxylic ester + H2O = an alcohol + a carboxylate + H(+). The protein is Esterase-5B (Est-5B) of Drosophila miranda (Fruit fly).